Consider the following 370-residue polypeptide: Vasopressin V2 receptor (370 aa).

Residues 1-28 (MLRATTSAVPRALSWPAAPGNGSEREPL) form a disordered region. Residues 1 to 37 (MLRATTSAVPRALSWPAAPGNGSEREPLDDRDPLLAR) are Extracellular-facing. Asn-21 carries an N-linked (GlcNAc...) asparagine glycan. Residues 38-62 (VELALLSTVFVAVALSNGLVLGALV) form a helical membrane-spanning segment. Over 63-76 (RRGRRGRWAPMHVF) the chain is Cytoplasmic. A helical membrane pass occupies residues 77 to 97 (IGHLCLADLAVALFQVLPQLA). Over 98 to 112 (WDATYRFRGPDALCR) the chain is Extracellular. A helical membrane pass occupies residues 113–134 (AVKYLQMVGMYASSYMILAMTL). At 135–158 (DRHRAICRPMLAYRHGGGARWNRP) the chain is on the cytoplasmic side. Residues 159–179 (VLVAWAFSLLLSLPQLFIFAQ) form a helical membrane-spanning segment. The Extracellular portion of the chain corresponds to 180–199 (RDVGDGSGVLDCWASFAEPW). A helical membrane pass occupies residues 200–219 (GLRAYVTWIALMVFVAPALG). Topologically, residues 220–270 (IAACQVLIFREIHTSLVPGPAERAGGHRGGRRAGSPREGARVSAAMAKTAR) are cytoplasmic. The chain crosses the membrane as a helical span at residues 271–292 (MTLVIVAVYVLCWAPFFLVQLW). Residues 293 to 307 (SVWDPKAPREGPPFV) lie on the Extracellular side of the membrane. The helical transmembrane segment at 308-327 (LLMLLASLNSCTNPWIYASF) threads the bilayer. At 328 to 370 (SSSISSELRSLLCCPRRRTPPSLRPQEESCATASSFSARDTSS) the chain is on the cytoplasmic side. 2 S-palmitoyl cysteine lipidation sites follow: Cys-340 and Cys-341. Residues 347 to 370 (PPSLRPQEESCATASSFSARDTSS) are disordered. Residues 356–370 (SCATASSFSARDTSS) show a composition bias toward polar residues.

The protein belongs to the G-protein coupled receptor 1 family. Vasopressin/oxytocin receptor subfamily. Interacts with ARRDC4. Identified in a complex containing at least ARRDC4, V2R and HGS. Interacts with TMEM147.

Its subcellular location is the cell membrane. In terms of biological role, receptor for arginine vasopressin. The activity of this receptor is mediated by G proteins which activate adenylate cyclase. Involved in renal water reabsorption. This is Vasopressin V2 receptor (AVPR2) from Sus scrofa (Pig).